Reading from the N-terminus, the 556-residue chain is Oxygen-dependent choline dehydrogenase (556 aa).

An FAD-binding site is contributed by 6 to 35 (DYIIIGAGSAGNVLAARLTEDPGVSVLLLE). The active-site Proton acceptor is the His475.

This sequence belongs to the GMC oxidoreductase family. Requires FAD as cofactor.

It catalyses the reaction choline + A = betaine aldehyde + AH2. The enzyme catalyses betaine aldehyde + NAD(+) + H2O = glycine betaine + NADH + 2 H(+). It participates in amine and polyamine biosynthesis; betaine biosynthesis via choline pathway; betaine aldehyde from choline (cytochrome c reductase route): step 1/1. Its function is as follows. Involved in the biosynthesis of the osmoprotectant glycine betaine. Catalyzes the oxidation of choline to betaine aldehyde and betaine aldehyde to glycine betaine at the same rate. This Xanthomonas campestris pv. campestris (strain 8004) protein is Oxygen-dependent choline dehydrogenase.